A 288-amino-acid polypeptide reads, in one-letter code: 2-hydroxy-6-oxononadienedioate/2-hydroxy-6-oxononatrienedioate hydrolase (288 aa).

The 236-residue stretch at 38-273 folds into the AB hydrolase-1 domain; the sequence is VVLLHGSGPG…DCGHWAQWEH (236 aa). Histidine 267 functions as the Proton acceptor in the catalytic mechanism.

It belongs to the AB hydrolase superfamily. MhpC family. Homodimer.

The catalysed reaction is (2Z,4E)-2-hydroxy-6-oxonona-2,4-dienedioate + H2O = (2Z)-2-hydroxypenta-2,4-dienoate + succinate + H(+). It carries out the reaction (2Z,4E,7E)-2-hydroxy-6-oxonona-2,4,7-trienedioate + H2O = (2Z)-2-hydroxypenta-2,4-dienoate + fumarate + H(+). It functions in the pathway aromatic compound metabolism; 3-phenylpropanoate degradation. Catalyzes the cleavage of the C5-C6 bond of 2-hydroxy-6-oxononadienedioate and 2-hydroxy-6-oxononatrienedioate, a dienol ring fission product of the bacterial meta-cleavage pathway for degradation of phenylpropionic acid. The sequence is that of 2-hydroxy-6-oxononadienedioate/2-hydroxy-6-oxononatrienedioate hydrolase from Escherichia coli O139:H28 (strain E24377A / ETEC).